The following is a 143-amino-acid chain: Transcriptional regulator MraZ (143 aa).

2 SpoVT-AbrB domains span residues 5-47 (TYTP…PRAA) and 76-119 (TDEQ…DAQA).

This sequence belongs to the MraZ family. In terms of assembly, forms oligomers.

The protein resides in the cytoplasm. Its subcellular location is the nucleoid. The protein is Transcriptional regulator MraZ of Mycobacterium bovis (strain ATCC BAA-935 / AF2122/97).